The following is a 131-amino-acid chain: D-ribose pyranase (131 aa).

The Proton donor role is filled by H20. Substrate is bound by residues D28, H98, and 120–122; that span reads YAN.

This sequence belongs to the RbsD / FucU family. RbsD subfamily. As to quaternary structure, homodecamer.

The protein localises to the cytoplasm. It catalyses the reaction beta-D-ribopyranose = beta-D-ribofuranose. It participates in carbohydrate metabolism; D-ribose degradation; D-ribose 5-phosphate from beta-D-ribopyranose: step 1/2. Its function is as follows. Catalyzes the interconversion of beta-pyran and beta-furan forms of D-ribose. This Symbiobacterium thermophilum (strain DSM 24528 / JCM 14929 / IAM 14863 / T) protein is D-ribose pyranase.